The primary structure comprises 330 residues: Calponin-3 (330 aa).

Position 23 is an N6-acetyllysine (lysine 23). The 105-residue stretch at glutamine 26–lysine 130 folds into the Calponin-homology (CH) domain. Position 158 is an N6-methyllysine (lysine 158). Calponin-like repeat units lie at residues isoleucine 164–tyrosine 189, isoleucine 204–tyrosine 229, and isoleucine 243–tyrosine 268. The disordered stretch occupies residues proline 279–tyrosine 330. Residues aspartate 306–arginine 318 are compositionally biased toward basic and acidic residues.

This sequence belongs to the calponin family.

Functionally, thin filament-associated protein that is implicated in the regulation and modulation of smooth muscle contraction. It is capable of binding to actin, calmodulin and tropomyosin. The interaction of calponin with actin inhibits the actomyosin Mg-ATPase activity. This is Calponin-3 (Cnn3) from Mus musculus (Mouse).